Here is a 424-residue protein sequence, read N- to C-terminus: Adenylosuccinate synthetase (424 aa).

Residues 12-18 (GDEGKGK) and 40-42 (GHT) each bind GTP. The Proton acceptor role is filled by Asp-13. 2 residues coordinate Mg(2+): Asp-13 and Gly-40. IMP is bound by residues 13–16 (DEGK), 38–41 (NAGH), Thr-130, Arg-144, Asn-220, Thr-235, and Arg-299. His-41 serves as the catalytic Proton donor. 295 to 301 (VTTGRRR) is a substrate binding site. GTP-binding positions include Arg-301, 327 to 329 (KLD), and 412 to 414 (GTG).

It belongs to the adenylosuccinate synthetase family. As to quaternary structure, homodimer. It depends on Mg(2+) as a cofactor.

Its subcellular location is the cytoplasm. The enzyme catalyses IMP + L-aspartate + GTP = N(6)-(1,2-dicarboxyethyl)-AMP + GDP + phosphate + 2 H(+). It functions in the pathway purine metabolism; AMP biosynthesis via de novo pathway; AMP from IMP: step 1/2. Its function is as follows. Plays an important role in the de novo pathway and in the salvage pathway of purine nucleotide biosynthesis. Catalyzes the first committed step in the biosynthesis of AMP from IMP. The chain is Adenylosuccinate synthetase from Aspergillus clavatus (strain ATCC 1007 / CBS 513.65 / DSM 816 / NCTC 3887 / NRRL 1 / QM 1276 / 107).